A 252-amino-acid polypeptide reads, in one-letter code: tRNA (guanine-N(1)-)-methyltransferase (252 aa).

Residues Gly-113 and 133–138 (IGDYVL) contribute to the S-adenosyl-L-methionine site.

Belongs to the RNA methyltransferase TrmD family. In terms of assembly, homodimer.

Its subcellular location is the cytoplasm. It catalyses the reaction guanosine(37) in tRNA + S-adenosyl-L-methionine = N(1)-methylguanosine(37) in tRNA + S-adenosyl-L-homocysteine + H(+). In terms of biological role, specifically methylates guanosine-37 in various tRNAs. This Nitrosococcus oceani (strain ATCC 19707 / BCRC 17464 / JCM 30415 / NCIMB 11848 / C-107) protein is tRNA (guanine-N(1)-)-methyltransferase.